We begin with the raw amino-acid sequence, 295 residues long: Zinc finger C2H2 protein ECU08_0560 (295 aa).

C2H2-type zinc fingers lie at residues 219–243 and 249–273; these read FVCT…NLMH and HKCR…YKVH.

The protein is Zinc finger C2H2 protein ECU08_0560 of Encephalitozoon cuniculi (strain GB-M1) (Microsporidian parasite).